Reading from the N-terminus, the 261-residue chain is Imidazole glycerol phosphate synthase subunit HisF (261 aa).

Residues Asp16 and Asp135 contribute to the active site.

It belongs to the HisA/HisF family. Heterodimer of HisH and HisF.

Its subcellular location is the cytoplasm. The enzyme catalyses 5-[(5-phospho-1-deoxy-D-ribulos-1-ylimino)methylamino]-1-(5-phospho-beta-D-ribosyl)imidazole-4-carboxamide + L-glutamine = D-erythro-1-(imidazol-4-yl)glycerol 3-phosphate + 5-amino-1-(5-phospho-beta-D-ribosyl)imidazole-4-carboxamide + L-glutamate + H(+). The protein operates within amino-acid biosynthesis; L-histidine biosynthesis; L-histidine from 5-phospho-alpha-D-ribose 1-diphosphate: step 5/9. IGPS catalyzes the conversion of PRFAR and glutamine to IGP, AICAR and glutamate. The HisF subunit catalyzes the cyclization activity that produces IGP and AICAR from PRFAR using the ammonia provided by the HisH subunit. The chain is Imidazole glycerol phosphate synthase subunit HisF from Mycolicibacterium vanbaalenii (strain DSM 7251 / JCM 13017 / BCRC 16820 / KCTC 9966 / NRRL B-24157 / PYR-1) (Mycobacterium vanbaalenii).